Consider the following 321-residue polypeptide: Protein ABIL3 (321 aa).

2 disordered regions span residues 179 to 273 (TIRE…RSAS) and 279 to 298 (EKEA…SKRL). Composition is skewed to low complexity over residues 204–215 (SATFSFSSIATA) and 240–255 (IRPS…SKSR). Residues 279-288 (EKEAQKEPEH) show a composition bias toward basic and acidic residues.

It belongs to the ABI family. In terms of assembly, binds SCAR.

The protein resides in the cytoplasm. Its subcellular location is the cytoskeleton. Functionally, involved in regulation of actin and microtubule organization. Part of a WAVE complex that activates the Arp2/3 complex. This Arabidopsis thaliana (Mouse-ear cress) protein is Protein ABIL3 (ABIL3).